A 350-amino-acid polypeptide reads, in one-letter code: MNTFAEVQKLYREYYNFAIKNNILEIPEGIEYREFGYGYLKKVDNRNLSFKNEREYKDWVLKNAPMHFYKSLAYMLYPNKSGGASKKGIFRRELAFDIDVHKTKKCKHEDDWICKHCLEEAKNQAIYLIEEFLIPDFGLNEEDLKIVFSGNRGYHIYIKPRDEKIRDIIESYSKEDRRFLMDYILGKNLNLNSVGSGWRRRLIKAIKERDKRISTKKLENEKNWKKVIENLKSKNKIYNIIEETKNKIELDEKVMDDDIRLLRVINSLHGYTGFIVKPLSGLDELRRFNPLEDAIFKDFENKVYEVNIFDDRKFEIEICGKKYNNKSKKITASALLYLFGHNIKFELLKS.

Active-site residues include Asp97, Asp99, and Asp251.

This sequence belongs to the eukaryotic-type primase small subunit family. As to quaternary structure, heterodimer of a small subunit (PriS) and a large subunit (PriL). Mg(2+) serves as cofactor. Requires Mn(2+) as cofactor. Zn(2+) is required as a cofactor.

Its function is as follows. Catalytic subunit of DNA primase, an RNA polymerase that catalyzes the synthesis of short RNA molecules used as primers for DNA polymerase during DNA replication. The small subunit contains the primase catalytic core and has DNA synthesis activity on its own. Binding to the large subunit stabilizes and modulates the activity, increasing the rate of DNA synthesis while decreasing the length of the DNA fragments, and conferring RNA synthesis capability. The DNA polymerase activity may enable DNA primase to also catalyze primer extension after primer synthesis. May also play a role in DNA repair. The sequence is that of DNA primase small subunit PriS from Methanocaldococcus jannaschii (strain ATCC 43067 / DSM 2661 / JAL-1 / JCM 10045 / NBRC 100440) (Methanococcus jannaschii).